Here is a 414-residue protein sequence, read N- to C-terminus: Gamma-glutamyl phosphate reductase (414 aa).

Belongs to the gamma-glutamyl phosphate reductase family.

It is found in the cytoplasm. The catalysed reaction is L-glutamate 5-semialdehyde + phosphate + NADP(+) = L-glutamyl 5-phosphate + NADPH + H(+). It functions in the pathway amino-acid biosynthesis; L-proline biosynthesis; L-glutamate 5-semialdehyde from L-glutamate: step 2/2. Catalyzes the NADPH-dependent reduction of L-glutamate 5-phosphate into L-glutamate 5-semialdehyde and phosphate. The product spontaneously undergoes cyclization to form 1-pyrroline-5-carboxylate. This Kosmotoga olearia (strain ATCC BAA-1733 / DSM 21960 / TBF 19.5.1) protein is Gamma-glutamyl phosphate reductase.